A 298-amino-acid polypeptide reads, in one-letter code: Inosose dehydratase (298 aa).

The protein belongs to the IolE/MocC family. The cofactor is glutathione. Requires Co(2+) as cofactor. It depends on Mn(2+) as a cofactor.

The catalysed reaction is scyllo-inosose = 3D-3,5/4-trihydroxycyclohexane-1,2-dione + H2O. In terms of biological role, catalyzes the dehydration of inosose (2-keto-myo-inositol, 2KMI or 2,4,6/3,5-pentahydroxycyclohexanone) to 3D-(3,5/4)-trihydroxycyclohexane-1,2-dione (D-2,3-diketo-4-deoxy-epi-inositol). The sequence is that of Inosose dehydratase from Erwinia tasmaniensis (strain DSM 17950 / CFBP 7177 / CIP 109463 / NCPPB 4357 / Et1/99).